We begin with the raw amino-acid sequence, 59 residues long: UPF0434 protein Shew185_1670 (59 aa).

This sequence belongs to the UPF0434 family.

The sequence is that of UPF0434 protein Shew185_1670 from Shewanella baltica (strain OS185).